A 242-amino-acid polypeptide reads, in one-letter code: Uridylate kinase (242 aa).

11-14 provides a ligand contact to ATP; sequence KLSG. Residues 19 to 24 form an involved in allosteric activation by GTP region; that stretch reads GDKGVG. A UMP-binding site is contributed by glycine 53. ATP is bound by residues glycine 54 and arginine 58. UMP-binding positions include aspartate 73 and 134–141; that span reads IGSPYFST. ATP contacts are provided by asparagine 162, tyrosine 168, and aspartate 171.

This sequence belongs to the UMP kinase family. Homohexamer.

Its subcellular location is the cytoplasm. The enzyme catalyses UMP + ATP = UDP + ADP. It participates in pyrimidine metabolism; CTP biosynthesis via de novo pathway; UDP from UMP (UMPK route): step 1/1. Its activity is regulated as follows. Allosterically activated by GTP. Inhibited by UTP. Functionally, catalyzes the reversible phosphorylation of UMP to UDP. The chain is Uridylate kinase from Streptococcus agalactiae serotype III (strain NEM316).